The sequence spans 584 residues: Protein DENND6A (584 aa).

The interval 1 to 23 (MALWERGAGGAAEAGEDATEEPE) is disordered. The 180-residue stretch at 39–218 (HCVCVVGFDL…KLRIPTYRDK (180 aa)) folds into the uDENN domain. Positions 244 to 369 (EVDLFRCFCP…VKVKKLKNLK (126 aa)) constitute a cDENN domain. Residues 371–504 (LDSKPGVYTS…RSRQKEMTQN (134 aa)) form the dDENN domain.

This sequence belongs to the DENND6 family.

The protein resides in the recycling endosome. The protein localises to the cytoplasm. Functionally, guanine nucleotide exchange factor (GEF) for RAB14. The polypeptide is Protein DENND6A (DENND6A) (Gallus gallus (Chicken)).